Here is a 245-residue protein sequence, read N- to C-terminus: MYPVDLHMHTVASTHAYSTLHDYIAEAKRKGIKLFAITDHGPDMADAPHYWHFVNMRIWPRLVDGVGILRGIESNIKNIEGEIDCSGPMLTSLDLIIAGFHEPVFPPQDRDTHTQAMIAAMASGKVHMISHPGNPKFPVDIPAIAEAAARYQVALEINNSSFISSRVGSEDNCRAIAAAVRDAGGWVALGSDSHTAFTLGEFTECRKILDAVDFPEERILNVSPRRLLNFLESRGMPAIPEFADL.

Residues His-7, His-9, His-15, His-40, Glu-73, His-101, His-131, Asp-192, and His-194 each coordinate Zn(2+).

This sequence belongs to the PHP family. As to quaternary structure, homotrimer. Zn(2+) is required as a cofactor.

The sequence is that of Probable phosphatase KPK_3500 from Klebsiella pneumoniae (strain 342).